The sequence spans 371 residues: Alanine dehydrogenase (371 aa).

Substrate contacts are provided by Arg-15 and Lys-75. The active-site Proton donor/acceptor is His-96. Residues Ser-134, 178 to 179 (TA), Asp-198, Ser-220, 239 to 240 (VL), 267 to 270 (IAID), Arg-279, and 298 to 301 (VANM) contribute to the NAD(+) site. Residue Asp-270 is the Proton donor/acceptor of the active site.

This sequence belongs to the AlaDH/PNT family. As to quaternary structure, homohexamer. Trimer of dimers.

It localises to the cytoplasm. The enzyme catalyses L-alanine + NAD(+) + H2O = pyruvate + NH4(+) + NADH + H(+). Its pathway is amino-acid degradation; L-alanine degradation via dehydrogenase pathway; NH(3) and pyruvate from L-alanine: step 1/1. In terms of biological role, catalyzes the reversible reductive amination of pyruvate to L-alanine. Required for proficient utilization of D- or L-alanine as a nitrogen source. May be required for the adaptation from aerobic growth to anaerobic dormancy. It could be involved in the maintenance of the NAD pool during the shift to an anaerobic dormant state in which oxygen as a terminal electron acceptor becomes limiting. In Mycolicibacterium smegmatis (strain ATCC 700084 / mc(2)155) (Mycobacterium smegmatis), this protein is Alanine dehydrogenase.